Consider the following 411-residue polypeptide: Bifunctional protein GlmU (411 aa).

Positions M1–N204 are pyrophosphorylase. Residues L6 to G9, Q74, and G79 contribute to the UTP site. N-acetyl-alpha-D-glucosamine 1-phosphate is bound by residues T80, G132, E144, and N158. The tract at residues G205–L224 is linker. The N-acetyltransferase stretch occupies residues K225–K411. Residue H308 is the Proton acceptor of the active site. Acetyl-CoA is bound by residues A384 and K401.

It in the N-terminal section; belongs to the N-acetylglucosamine-1-phosphate uridyltransferase family. In the C-terminal section; belongs to the transferase hexapeptide repeat family.

The catalysed reaction is N-acetyl-alpha-D-glucosamine 1-phosphate + UTP + H(+) = UDP-N-acetyl-alpha-D-glucosamine + diphosphate. The enzyme catalyses alpha-D-glucosamine 1-phosphate + acetyl-CoA = N-acetyl-alpha-D-glucosamine 1-phosphate + CoA + H(+). It participates in nucleotide-sugar biosynthesis; UDP-N-acetyl-alpha-D-glucosamine biosynthesis; N-acetyl-alpha-D-glucosamine 1-phosphate from alpha-D-glucosamine 6-phosphate (route II): step 2/2. It functions in the pathway nucleotide-sugar biosynthesis; UDP-N-acetyl-alpha-D-glucosamine biosynthesis; UDP-N-acetyl-alpha-D-glucosamine from N-acetyl-alpha-D-glucosamine 1-phosphate: step 1/1. Functionally, catalyzes the last two sequential reactions in the de novo biosynthetic pathway for UDP-N-acetyl-glucosamine (UDP-GlcNAc). Responsible for the acetylation of GlcN-1-P to GlcNAc-1-P, and for the uridyl transfer from UTP to GlcNAc-1-P, to produce UDP-GlcNAc and pyrophosphate. The protein is Bifunctional protein GlmU of Methanococcus aeolicus (strain ATCC BAA-1280 / DSM 17508 / OCM 812 / Nankai-3).